We begin with the raw amino-acid sequence, 188 residues long: MISISNVSKGAIIRFKGEPHSIESLMHRTPGNLRAFYQANMRNLKSGRNVEYRFSATESVDVIITERKQYQYLYRDGSDFVMMDSETFDQINVPEIAIGSASRFVKDGITVTIVFSDDASILGVELPTFVEVEVTETSPASKDDRATSGTKPAMVETGTEVSVPMFIQTGSIIRVDTRTGEYIERVKK.

Belongs to the elongation factor P family.

It localises to the cytoplasm. Its pathway is protein biosynthesis; polypeptide chain elongation. Functionally, involved in peptide bond synthesis. Stimulates efficient translation and peptide-bond synthesis on native or reconstituted 70S ribosomes in vitro. Probably functions indirectly by altering the affinity of the ribosome for aminoacyl-tRNA, thus increasing their reactivity as acceptors for peptidyl transferase. The chain is Elongation factor P from Pelodictyon phaeoclathratiforme (strain DSM 5477 / BU-1).